Reading from the N-terminus, the 341-residue chain is MIEFQNVTKTFTLGKRKVEAVKEVSLTIEKGDIYGIIGFSGAGKSTLLRLVNMLERPTEGSVHIQGTDVGKLSAKQLRERRRNIGMIFQNFNLFQSRTVAGNIAYPLKLAGTSKSVVTKRVSELLQFVGLSDKAKDYPDQLSGGQKQRVGIARALATSPDILICDEATSALDPNTTSDILKLLKKVNRDLGITILLITHEMGVIQSICDKVAVMEDGKVIENGNVFDTFTKPSHETTKRFIRSVQQELPSEKVLKEWTEAGGGNLYRVLFKGERATDPILSSTTRKHNIDFNIVYGSVRELQEKLFGNLIVSFGGDEQQIQHVIQELELIVDIEEVYSHGG.

An ABC transporter domain is found at 2 to 241 (IEFQNVTKTF…PSHETTKRFI (240 aa)). 38–45 (GFSGAGKS) provides a ligand contact to ATP.

It belongs to the ABC transporter superfamily. Methionine importer (TC 3.A.1.24) family. As to quaternary structure, the complex is composed of two ATP-binding proteins (MetN), two transmembrane proteins (MetI) and a solute-binding protein (MetQ).

It is found in the cell membrane. The enzyme catalyses L-methionine(out) + ATP + H2O = L-methionine(in) + ADP + phosphate + H(+). It catalyses the reaction D-methionine(out) + ATP + H2O = D-methionine(in) + ADP + phosphate + H(+). Functionally, part of the ABC transporter complex MetNIQ involved in methionine import. Responsible for energy coupling to the transport system. The polypeptide is Methionine import ATP-binding protein MetN 3 (Oceanobacillus iheyensis (strain DSM 14371 / CIP 107618 / JCM 11309 / KCTC 3954 / HTE831)).